The primary structure comprises 216 residues: Small ribosomal subunit protein uS3c (216 aa).

Residues 43–115 (FENDWGTLYN…QTRIKVIQVN (73 aa)) form the KH type-2 domain.

It belongs to the universal ribosomal protein uS3 family. As to quaternary structure, part of the 30S ribosomal subunit.

The protein localises to the plastid. The protein resides in the chloroplast. The polypeptide is Small ribosomal subunit protein uS3c (rps3) (Emiliania huxleyi (Coccolithophore)).